Here is a 118-residue protein sequence, read N- to C-terminus: Large ribosomal subunit protein uL22 (118 aa).

Belongs to the universal ribosomal protein uL22 family. Part of the 50S ribosomal subunit.

In terms of biological role, this protein binds specifically to 23S rRNA; its binding is stimulated by other ribosomal proteins, e.g. L4, L17, and L20. It is important during the early stages of 50S assembly. It makes multiple contacts with different domains of the 23S rRNA in the assembled 50S subunit and ribosome. Its function is as follows. The globular domain of the protein is located near the polypeptide exit tunnel on the outside of the subunit, while an extended beta-hairpin is found that lines the wall of the exit tunnel in the center of the 70S ribosome. The chain is Large ribosomal subunit protein uL22 from Listeria innocua serovar 6a (strain ATCC BAA-680 / CLIP 11262).